Reading from the N-terminus, the 447-residue chain is N-succinylarginine dihydrolase (447 aa).

Substrate contacts are provided by residues 19-28 (AGLSFGNEAS), Asn-110, and 137-138 (HR). Residue Glu-174 is part of the active site. Residue Arg-212 participates in substrate binding. His-248 is an active-site residue. 2 residues coordinate substrate: Asp-250 and Asn-359. Residue Cys-365 is the Nucleophile of the active site.

The protein belongs to the succinylarginine dihydrolase family. Homodimer.

It catalyses the reaction N(2)-succinyl-L-arginine + 2 H2O + 2 H(+) = N(2)-succinyl-L-ornithine + 2 NH4(+) + CO2. It functions in the pathway amino-acid degradation; L-arginine degradation via AST pathway; L-glutamate and succinate from L-arginine: step 2/5. Catalyzes the hydrolysis of N(2)-succinylarginine into N(2)-succinylornithine, ammonia and CO(2). This is N-succinylarginine dihydrolase from Escherichia coli O1:K1 / APEC.